The chain runs to 216 residues: 3-keto-L-gulonate-6-phosphate decarboxylase UlaD (216 aa).

Asp11 provides a ligand contact to substrate. The Mg(2+) site is built by Glu33 and Asp62. Arg192 provides a ligand contact to substrate.

The protein belongs to the HPS/KGPDC family. KGPDC subfamily. As to quaternary structure, homodimer. Mg(2+) serves as cofactor.

It catalyses the reaction 3-dehydro-L-gulonate 6-phosphate + H(+) = L-xylulose 5-phosphate + CO2. Its pathway is cofactor degradation; L-ascorbate degradation; D-xylulose 5-phosphate from L-ascorbate: step 2/4. Its function is as follows. Catalyzes the decarboxylation of 3-keto-L-gulonate-6-P into L-xylulose-5-P. Is involved in the anaerobic L-ascorbate utilization. The protein is 3-keto-L-gulonate-6-phosphate decarboxylase UlaD of Escherichia fergusonii (strain ATCC 35469 / DSM 13698 / CCUG 18766 / IAM 14443 / JCM 21226 / LMG 7866 / NBRC 102419 / NCTC 12128 / CDC 0568-73).